A 773-amino-acid polypeptide reads, in one-letter code: 5-methyltetrahydropteroyltriglutamate--homocysteine methyltransferase (773 aa).

Residues 16–19 (RELK) and Lys116 each bind 5-methyltetrahydropteroyltri-L-glutamate. Residues 437–439 (IGS) and Glu490 contribute to the L-homocysteine site. Residues 437–439 (IGS) and Glu490 each bind L-methionine. Residues 521-522 (RC) and Trp567 each bind 5-methyltetrahydropteroyltri-L-glutamate. Asp605 provides a ligand contact to L-homocysteine. Residue Asp605 participates in L-methionine binding. A 5-methyltetrahydropteroyltri-L-glutamate-binding site is contributed by Glu611. Residues His647, Cys649, and Glu671 each contribute to the Zn(2+) site. His700 acts as the Proton donor in catalysis. Cys732 lines the Zn(2+) pocket.

It belongs to the vitamin-B12 independent methionine synthase family. Zn(2+) is required as a cofactor.

The enzyme catalyses 5-methyltetrahydropteroyltri-L-glutamate + L-homocysteine = tetrahydropteroyltri-L-glutamate + L-methionine. It functions in the pathway amino-acid biosynthesis; L-methionine biosynthesis via de novo pathway; L-methionine from L-homocysteine (MetE route): step 1/1. Its function is as follows. Catalyzes the transfer of a methyl group from 5-methyltetrahydrofolate to homocysteine resulting in methionine formation. The polypeptide is 5-methyltetrahydropteroyltriglutamate--homocysteine methyltransferase (Alkalilimnicola ehrlichii (strain ATCC BAA-1101 / DSM 17681 / MLHE-1)).